Here is a 99-residue protein sequence, read N- to C-terminus: Small ribosomal subunit protein bS20 (99 aa).

It belongs to the bacterial ribosomal protein bS20 family.

Functionally, binds directly to 16S ribosomal RNA. The chain is Small ribosomal subunit protein bS20 from Cyanothece sp. (strain PCC 7425 / ATCC 29141).